The chain runs to 257 residues: Imidazole glycerol phosphate synthase subunit HisF (257 aa).

Catalysis depends on residues Asp11 and Asp130.

This sequence belongs to the HisA/HisF family. In terms of assembly, heterodimer of HisH and HisF.

The protein resides in the cytoplasm. The catalysed reaction is 5-[(5-phospho-1-deoxy-D-ribulos-1-ylimino)methylamino]-1-(5-phospho-beta-D-ribosyl)imidazole-4-carboxamide + L-glutamine = D-erythro-1-(imidazol-4-yl)glycerol 3-phosphate + 5-amino-1-(5-phospho-beta-D-ribosyl)imidazole-4-carboxamide + L-glutamate + H(+). It functions in the pathway amino-acid biosynthesis; L-histidine biosynthesis; L-histidine from 5-phospho-alpha-D-ribose 1-diphosphate: step 5/9. IGPS catalyzes the conversion of PRFAR and glutamine to IGP, AICAR and glutamate. The HisF subunit catalyzes the cyclization activity that produces IGP and AICAR from PRFAR using the ammonia provided by the HisH subunit. In Mannheimia succiniciproducens (strain KCTC 0769BP / MBEL55E), this protein is Imidazole glycerol phosphate synthase subunit HisF.